The primary structure comprises 407 residues: MKRVYIMVLDSFGIGSSADAERFGDVGSDTLGHIAQACAAGTADKGRSGSLHLPNLSRLGLGKAAEASTGTFPAGLDENADIIGAYAHASEISSGKDTPSGHWEIAGVPVLFDWGYFKDEENSFPQELLDKLVKRANLPGYLGNCHSSGTVILDQLAEEHMKTGKPIFYTSADSVFQIACHEETFGLDKLYELCEIAREELTEGDYNIGRVIARPFIGDKPGNFERTGNRHDLAVEPPAPTILKKLVDEKGGEVVSVGKIADIYAQVGITKKVKATGIDALFDATLKEMDSAGDNTIVFTNFVDFDSAYGHRRDIPGYAAALELFDRRLPELMSRVTGDDILILTADHGCDPSWHGTDHTRENVPVLIYGPKVKPGSYGHRETFADIGQTVAAYFGLSPMDYGKSIL.

Residues Asp10, Asp306, His311, Asp347, His348, and His359 each coordinate Mn(2+).

This sequence belongs to the phosphopentomutase family. It depends on Mn(2+) as a cofactor.

Its subcellular location is the cytoplasm. It carries out the reaction 2-deoxy-alpha-D-ribose 1-phosphate = 2-deoxy-D-ribose 5-phosphate. The catalysed reaction is alpha-D-ribose 1-phosphate = D-ribose 5-phosphate. Its pathway is carbohydrate degradation; 2-deoxy-D-ribose 1-phosphate degradation; D-glyceraldehyde 3-phosphate and acetaldehyde from 2-deoxy-alpha-D-ribose 1-phosphate: step 1/2. In terms of biological role, isomerase that catalyzes the conversion of deoxy-ribose 1-phosphate (dRib-1-P) and ribose 1-phosphate (Rib-1-P) to deoxy-ribose 5-phosphate (dRib-5-P) and ribose 5-phosphate (Rib-5-P), respectively. The polypeptide is Phosphopentomutase (Pectobacterium atrosepticum (strain SCRI 1043 / ATCC BAA-672) (Erwinia carotovora subsp. atroseptica)).